The chain runs to 531 residues: uncharacterized protein (531 aa).

The N-terminal stretch at 1–22 is a signal peptide; sequence MRLQFKLLGFLTLLGTSTILSA. Residue Cys-23 is the site of N-palmitoyl cysteine attachment. A lipid anchor (S-diacylglycerol cysteine) is attached at Cys-23. A disordered region spans residues 31-51; that stretch reads EPNNIEESGPITPTTPTTDVP. Residues 40 to 51 are compositionally biased toward low complexity; sequence PITPTTPTTDVP.

This sequence belongs to the MG067/MG068/MG395 family.

Its subcellular location is the cell membrane. This is an uncharacterized protein from Mycoplasma pneumoniae (strain ATCC 29342 / M129 / Subtype 1) (Mycoplasmoides pneumoniae).